Here is an 82-residue protein sequence, read N- to C-terminus: Small ribosomal subunit protein uS17 (82 aa).

The protein belongs to the universal ribosomal protein uS17 family. As to quaternary structure, part of the 30S ribosomal subunit.

Its function is as follows. One of the primary rRNA binding proteins, it binds specifically to the 5'-end of 16S ribosomal RNA. This chain is Small ribosomal subunit protein uS17, found in Phenylobacterium zucineum (strain HLK1).